The following is a 207-amino-acid chain: Cytochrome c biogenesis ATP-binding export protein CcmA (207 aa).

The ABC transporter domain occupies Leu4–Val207. Residue Gly36–Thr43 coordinates ATP.

The protein belongs to the ABC transporter superfamily. CcmA exporter (TC 3.A.1.107) family. The complex is composed of two ATP-binding proteins (CcmA) and two transmembrane proteins (CcmB).

It is found in the cell inner membrane. It carries out the reaction heme b(in) + ATP + H2O = heme b(out) + ADP + phosphate + H(+). Its function is as follows. Part of the ABC transporter complex CcmAB involved in the biogenesis of c-type cytochromes; once thought to export heme, this seems not to be the case, but its exact role is uncertain. Responsible for energy coupling to the transport system. The polypeptide is Cytochrome c biogenesis ATP-binding export protein CcmA (Escherichia coli O157:H7).